Here is a 173-residue protein sequence, read N- to C-terminus: Alpha-crystallin A chain (173 aa).

N-acetylmethionine is present on M1. Residues 1 to 63 form a required for complex formation with BFSP1 and BFSP2 region; the sequence is MDITIQHPWF…RTVLESGISE (63 aa). A Deamidated glutamine; partial modification is found at Q6. At S45 the chain carries Phosphoserine. Q50 carries the deamidated glutamine; partial modification. Residues 52-164 form the sHSP domain; that stretch reads LFRTVLESGI…SDRSIPVSRE (113 aa). N6-acetyllysine occurs at positions 70 and 99. Residues H100, E102, and H107 each coordinate Zn(2+). At S122 the chain carries Phosphoserine. Deamidated asparagine; partial is present on N123. The span at 146–167 shows a compositional bias: basic and acidic residues; it reads IHSDMDASHSDRSIPVSREEKP. The tract at residues 146–173 is disordered; the sequence is IHSDMDASHSDRSIPVSREEKPTLAPSS. H154 provides a ligand contact to Zn(2+). The O-linked (GlcNAc) serine glycan is linked to S162.

The protein belongs to the small heat shock protein (HSP20) family. As to quaternary structure, heteromer composed of three CRYAA and one CRYAB subunits. Inter-subunit bridging via zinc ions enhances stability, which is crucial as there is no protein turn over in the lens. Can also form homodimers and homotetramers (dimers of dimers) which serve as the building blocks of homooligomers. Within homooligomers, the zinc-binding motif is created from residues of 3 different molecules. His-100 and Glu-102 from one molecule are ligands of the zinc ion, and His-107 and His-154 residues from additional molecules complete the site with tetrahedral coordination geometry. Part of a complex required for lens intermediate filament formation composed of BFSP1, BFSP2 and CRYAA. Acetylation at Lys-70 may increase chaperone activity. Post-translationally, undergoes age-dependent proteolytical cleavage at the C-terminus.

It localises to the cytoplasm. The protein resides in the nucleus. Its function is as follows. Contributes to the transparency and refractive index of the lens. Acts as a chaperone, preventing aggregation of various proteins under a wide range of stress conditions. Required for the correct formation of lens intermediate filaments as part of a complex composed of BFSP1, BFSP2 and CRYAA. The sequence is that of Alpha-crystallin A chain (CRYAA) from Osphranter rufus (Red kangaroo).